Here is a 155-residue protein sequence, read N- to C-terminus: Peptide methionine sulfoxide reductase MsrB (155 aa).

A MsrB domain is found at 15–137 (REALIATLNA…NSVSLTFIPT (123 aa)). The Zn(2+) site is built by cysteine 54, cysteine 57, cysteine 103, and cysteine 106. The active-site Nucleophile is the cysteine 126.

This sequence belongs to the MsrB Met sulfoxide reductase family. It depends on Zn(2+) as a cofactor.

It catalyses the reaction L-methionyl-[protein] + [thioredoxin]-disulfide + H2O = L-methionyl-(R)-S-oxide-[protein] + [thioredoxin]-dithiol. This is Peptide methionine sulfoxide reductase MsrB from Xylella fastidiosa (strain M23).